Here is a 294-residue protein sequence, read N- to C-terminus: N-acetylmuramic acid 6-phosphate etherase (294 aa).

Residues 56-219 (TSYSLKNGGR…STLSMVSVGK (164 aa)) form the SIS domain. Residue Glu-84 is the Proton donor of the active site. The active site involves Glu-115.

The protein belongs to the GCKR-like family. MurNAc-6-P etherase subfamily. As to quaternary structure, homodimer.

The enzyme catalyses N-acetyl-D-muramate 6-phosphate + H2O = N-acetyl-D-glucosamine 6-phosphate + (R)-lactate. It functions in the pathway amino-sugar metabolism; 1,6-anhydro-N-acetylmuramate degradation. The protein operates within amino-sugar metabolism; N-acetylmuramate degradation. It participates in cell wall biogenesis; peptidoglycan recycling. Functionally, specifically catalyzes the cleavage of the D-lactyl ether substituent of MurNAc 6-phosphate, producing GlcNAc 6-phosphate and D-lactate. Together with AnmK, is also required for the utilization of anhydro-N-acetylmuramic acid (anhMurNAc) either imported from the medium or derived from its own cell wall murein, and thus plays a role in cell wall recycling. The polypeptide is N-acetylmuramic acid 6-phosphate etherase (Francisella tularensis subsp. novicida (strain U112)).